The following is a 1352-amino-acid chain: Ubiquitin carboxyl-terminal hydrolase 31 (1352 aa).

The span at 1-16 (MSKVTAPGSGPPAAAS) shows a compositional bias: low complexity. Disordered stretches follow at residues 1-62 (MSKV…RSVG) and 79-119 (SSEG…PPAC). A compositionally biased stretch (gly residues) spans 32-43 (RAGGGGAGGPGA). A compositionally biased stretch (low complexity) spans 44–62 (SGPAAPSSPSSPSSARSVG). Pro residues predominate over residues 95 to 117 (PPGPAAAPTPPPCPPPPASPAPP). The USP domain maps to 128–765 (AGLRNHGNTC…TAYILFYQRR (638 aa)). The active-site Nucleophile is Cys-137. Residues 162 to 185 (RAGRPEPSPDPEQPAGRGAQGQGE) form a disordered region. The active-site Proton acceptor is His-723. 3 disordered regions span residues 812–835 (LASL…FSTR), 919–939 (SSSY…AVGR), and 951–1352 (DESD…QKPQ). Residues 958–970 (LNSSVVDTQSKHS) show a composition bias toward polar residues. 4 stretches are compositionally biased toward low complexity: residues 992-1001 (VDQSDSVDSS), 1051-1070 (SSLS…SLKP), 1078-1089 (DSSSRGSGRHSS), and 1101-1138 (PKSQ…GPAT). Residues 1148-1159 (RTSDHSLSREGS) show a composition bias toward basic and acidic residues. The span at 1160–1181 (RQSLGSDRASATSTSKPNSPRV) shows a compositional bias: polar residues. A compositionally biased stretch (low complexity) spans 1198 to 1210 (SSSMASLRSPSTS). 2 stretches are compositionally biased toward basic and acidic residues: residues 1215–1225 (LKRDSKSEDKG) and 1234–1243 (RQKETRRSTD). The segment covering 1251–1264 (SKKAGGSSVKSVCK) has biased composition (low complexity). An N6-acetyllysine modification is found at Lys-1264. Composition is skewed to polar residues over residues 1278–1290 (PASQ…TTGK) and 1341–1352 (MQTSARPSQKPQ).

The protein belongs to the peptidase C19 family. In terms of processing, acetylated at Lys-1264. Acetylation decreases activity. Deacetylated by SIRT1. As to expression, widely expressed.

The enzyme catalyses Thiol-dependent hydrolysis of ester, thioester, amide, peptide and isopeptide bonds formed by the C-terminal Gly of ubiquitin (a 76-residue protein attached to proteins as an intracellular targeting signal).. In terms of biological role, deubiquitinase that recognizes and hydrolyzes the peptide bond at the C-terminal Gly of ubiquitin. May play a role in the regulation of NF-kappa-B signaling pathway by deubiquitinating TRAF2. Functionally, (Microbial infection) Plays a positive role in foot-and-mouth disease and classical swine fever viral infection. Mechanistically, associates with internal ribosomal entry site (IRES) element within the 5'-untranslated region of viral genomes to promote translation of the virus-encoded polyprotein. The sequence is that of Ubiquitin carboxyl-terminal hydrolase 31 (USP31) from Homo sapiens (Human).